A 118-amino-acid chain; its full sequence is Large ribosomal subunit protein uL18 (118 aa).

It belongs to the universal ribosomal protein uL18 family. In terms of assembly, part of the 50S ribosomal subunit; part of the 5S rRNA/L5/L18/L25 subcomplex. Contacts the 5S and 23S rRNAs.

Functionally, this is one of the proteins that bind and probably mediate the attachment of the 5S RNA into the large ribosomal subunit, where it forms part of the central protuberance. This chain is Large ribosomal subunit protein uL18, found in Lactobacillus acidophilus (strain ATCC 700396 / NCK56 / N2 / NCFM).